Reading from the N-terminus, the 429-residue chain is MIDPTLLRNNLSEIAEKLKVRRGFILDVDKFSQLEEQRKTLQIKTETLQAERNSRSKTIGAAKARGEDISTLLAEVDHMGAELNTVKEELANVLTEIEQLALTIPNIPADEVPLGKDDSDNKEVFRWGTPKKFDFEVKDHVALGEILGGLDFAAGVKLSGARFAVIKGQIARMHRALAQFMLDLHTEQHGYTEAYVPYLVNHTTLYGTGQLPKFGEELFHIKPLENEQTYALIPTAEVPVTNLVRDEIIDEADLPIKMTAHTPCFRSEAGSYGRDTRGLIRMHQFDKVELVQIVEPEKSMEALEELTNQAEKVLQLLNLPYRKVLLCTGDMGFGATKTYDLEVWIPAQNTYREISSCSNMWDFQARRMQARCRAKGDKKTRLVHTLNGSGLAVGRTLVAILENYQNADGSITVPEVLRPYMNGIEIIGK.

Residue 235-237 participates in L-serine binding; sequence TAE. Residue 266-268 coordinates ATP; it reads RSE. E289 contributes to the L-serine binding site. ATP is bound at residue 353 to 356; that stretch reads EISS. S389 provides a ligand contact to L-serine.

This sequence belongs to the class-II aminoacyl-tRNA synthetase family. Type-1 seryl-tRNA synthetase subfamily. As to quaternary structure, homodimer. The tRNA molecule binds across the dimer.

Its subcellular location is the cytoplasm. The enzyme catalyses tRNA(Ser) + L-serine + ATP = L-seryl-tRNA(Ser) + AMP + diphosphate + H(+). The catalysed reaction is tRNA(Sec) + L-serine + ATP = L-seryl-tRNA(Sec) + AMP + diphosphate + H(+). It functions in the pathway aminoacyl-tRNA biosynthesis; selenocysteinyl-tRNA(Sec) biosynthesis; L-seryl-tRNA(Sec) from L-serine and tRNA(Sec): step 1/1. Catalyzes the attachment of serine to tRNA(Ser). Is also able to aminoacylate tRNA(Sec) with serine, to form the misacylated tRNA L-seryl-tRNA(Sec), which will be further converted into selenocysteinyl-tRNA(Sec). This Histophilus somni (strain 2336) (Haemophilus somnus) protein is Serine--tRNA ligase.